A 745-amino-acid chain; its full sequence is 1,4-alpha-glucan branching enzyme GlgB (745 aa).

Asp416 (nucleophile) is an active-site residue. The active-site Proton donor is Glu469.

It belongs to the glycosyl hydrolase 13 family. GlgB subfamily. In terms of assembly, monomer.

The enzyme catalyses Transfers a segment of a (1-&gt;4)-alpha-D-glucan chain to a primary hydroxy group in a similar glucan chain.. Its pathway is glycan biosynthesis; glycogen biosynthesis. In terms of biological role, catalyzes the formation of the alpha-1,6-glucosidic linkages in glycogen by scission of a 1,4-alpha-linked oligosaccharide from growing alpha-1,4-glucan chains and the subsequent attachment of the oligosaccharide to the alpha-1,6 position. This is 1,4-alpha-glucan branching enzyme GlgB from Shewanella sp. (strain MR-4).